The chain runs to 329 residues: Serine dehydratase-like (329 aa).

N-acetylmethionine is present on methionine 1. An N6-(pyridoxal phosphate)lysine modification is found at lysine 48.

Belongs to the serine/threonine dehydratase family. As to quaternary structure, monomer. Homodimer. It depends on pyridoxal 5'-phosphate as a cofactor.

The catalysed reaction is L-serine = pyruvate + NH4(+). It catalyses the reaction L-threonine = 2-oxobutanoate + NH4(+). It carries out the reaction L-glutamate = D-glutamate. Serine dehydratase activity is inhibited by manganese chloride, ferrous chloride, cobalt chloride, cupric chloride, nickel chloride and zinc chloride. Glutamate racemase activity is inhibited by manganese chloride, ferrous chloride, cupric chloride and zinc chloride. In terms of biological role, catalyzes the pyridoxal-phosphate-dependent dehydrative deamination of L-threonine and L-serine to ammonia and alpha-ketobutyrate and pyruvate, respectively. Also exhibits racemase activity towards L-glutamate and D-glutamate. This Rattus norvegicus (Rat) protein is Serine dehydratase-like (Sdsl).